The following is a 214-amino-acid chain: Pyridoxine/pyridoxamine 5'-phosphate oxidase (214 aa).

Substrate-binding positions include 9-12 and Lys-67; that span reads RKSY. FMN contacts are provided by residues 62–67, 77–78, Arg-83, Lys-84, and Gln-106; these read RIVLLK and YT. Substrate is bound by residues Tyr-124, Arg-128, and Ser-132. FMN is bound by residues 141-142 and Trp-186; that span reads QS. A substrate-binding site is contributed by 192–194; that stretch reads RLH. Position 196 (Arg-196) interacts with FMN.

It belongs to the pyridoxamine 5'-phosphate oxidase family. Homodimer. It depends on FMN as a cofactor.

It catalyses the reaction pyridoxamine 5'-phosphate + O2 + H2O = pyridoxal 5'-phosphate + H2O2 + NH4(+). The enzyme catalyses pyridoxine 5'-phosphate + O2 = pyridoxal 5'-phosphate + H2O2. It functions in the pathway cofactor metabolism; pyridoxal 5'-phosphate salvage; pyridoxal 5'-phosphate from pyridoxamine 5'-phosphate: step 1/1. Its pathway is cofactor metabolism; pyridoxal 5'-phosphate salvage; pyridoxal 5'-phosphate from pyridoxine 5'-phosphate: step 1/1. Its function is as follows. Catalyzes the oxidation of either pyridoxine 5'-phosphate (PNP) or pyridoxamine 5'-phosphate (PMP) into pyridoxal 5'-phosphate (PLP). The protein is Pyridoxine/pyridoxamine 5'-phosphate oxidase of Leptospira interrogans serogroup Icterohaemorrhagiae serovar copenhageni (strain Fiocruz L1-130).